A 75-amino-acid chain; its full sequence is Conotoxin VnMKLT2-012 (75 aa).

A signal peptide spans 1-23 (MMKLTCVLIIAVLFLTACQLTTA). Positions 24–45 (ETRDEYRAVRSSDEVRNSRSTR) are excised as a propeptide. Residues 31 to 45 (AVRSSDEVRNSRSTR) show a composition bias toward basic and acidic residues. The tract at residues 31 to 50 (AVRSSDEVRNSRSTRDCSGS) is disordered. Intrachain disulfides connect Cys47–Cys60, Cys54–Cys65, and Cys59–Cys74.

This sequence belongs to the conotoxin O1 superfamily. Expressed by the venom duct.

It localises to the secreted. In Conus ventricosus (Mediterranean cone), this protein is Conotoxin VnMKLT2-012.